Consider the following 710-residue polypeptide: WD repeat-containing protein CG11141 (710 aa).

WD repeat units lie at residues 31–70 (FFPA…MQKL) and 133–172 (LHKC…HLSK). The interval 283-307 (LNPKQRSEPSGTHHTSASTSSTRHS) is disordered. The segment covering 292 to 307 (SGTHHTSASTSSTRHS) has biased composition (low complexity). Thr-488 is subject to Phosphothreonine. A Phosphoserine modification is found at Ser-553. 2 disordered regions span residues 612-635 (ASIQ…GEPV) and 685-710 (DPLA…FLDN). 2 stretches are compositionally biased toward polar residues: residues 613 to 624 (SIQTSSRENATN) and 694 to 704 (PATSDSNTSSE).

Belongs to the WD repeat KIAA0329 family.

The protein is WD repeat-containing protein CG11141 of Drosophila melanogaster (Fruit fly).